Reading from the N-terminus, the 361-residue chain is Lactate-binding periplasmic protein TTHA0766 (361 aa).

The tat-type signal signal peptide spans 1–22 (MKRVSRRAFLRRLGVGVAATAA). Substrate is bound by residues Tyr-101, Asn-158, and Arg-178. Asn-158 is a Ca(2+) binding site. 3 residues coordinate Ca(2+): Asp-216, Phe-217, and Gln-247. Substrate-binding positions include Phe-217 and 247 to 250 (QPVD).

Belongs to the bacterial solute-binding protein 7 family. In terms of assembly, homodimer. The complex comprises the extracytoplasmic solute receptor protein TTHA0766, and the two putative transmembrane proteins TTHA0767 and TTHA0768.

It localises to the periplasm. Its function is as follows. Part of the tripartite ATP-independent periplasmic (TRAP) transport system involved in the uptake of lactate. This protein specifically binds L-lactate. The polypeptide is Lactate-binding periplasmic protein TTHA0766 (Thermus thermophilus (strain ATCC 27634 / DSM 579 / HB8)).